Here is a 180-residue protein sequence, read N- to C-terminus: Kappa-casein (180 aa).

The first 21 residues, 1-21 (MMKHFLLVVNILAVTLPFLAA), serve as a signal peptide directing secretion. O-linked (GalNAc...) threonine glycans are attached at residues Thr-132, Thr-142, Thr-147, and Thr-153. Residue Ser-160 is modified to Phosphoserine; alternate. Ser-160 carries an O-linked (GalNAc...) serine; alternate glycan.

This sequence belongs to the kappa-casein family. Mammary gland specific. Secreted in milk.

The protein resides in the secreted. Its function is as follows. Kappa-casein stabilizes micelle formation, preventing casein precipitation in milk. This is Kappa-casein (CSN3) from Oryctolagus cuniculus (Rabbit).